Reading from the N-terminus, the 424-residue chain is Proline--tRNA ligase (424 aa).

The protein belongs to the class-II aminoacyl-tRNA synthetase family. ProS type 2 subfamily. Homodimer.

It localises to the cytoplasm. It catalyses the reaction tRNA(Pro) + L-proline + ATP = L-prolyl-tRNA(Pro) + AMP + diphosphate. Functionally, catalyzes the attachment of proline to tRNA(Pro) in a two-step reaction: proline is first activated by ATP to form Pro-AMP and then transferred to the acceptor end of tRNA(Pro). The chain is Proline--tRNA ligase from Ehrlichia chaffeensis (strain ATCC CRL-10679 / Arkansas).